A 234-amino-acid chain; its full sequence is 3-deoxy-manno-octulosonate cytidylyltransferase (234 aa).

This sequence belongs to the KdsB family.

The protein resides in the cytoplasm. The enzyme catalyses 3-deoxy-alpha-D-manno-oct-2-ulosonate + CTP = CMP-3-deoxy-beta-D-manno-octulosonate + diphosphate. It functions in the pathway nucleotide-sugar biosynthesis; CMP-3-deoxy-D-manno-octulosonate biosynthesis; CMP-3-deoxy-D-manno-octulosonate from 3-deoxy-D-manno-octulosonate and CTP: step 1/1. It participates in bacterial outer membrane biogenesis; lipopolysaccharide biosynthesis. Functionally, activates KDO (a required 8-carbon sugar) for incorporation into bacterial lipopolysaccharide in Gram-negative bacteria. In Aquifex aeolicus (strain VF5), this protein is 3-deoxy-manno-octulosonate cytidylyltransferase.